A 140-amino-acid polypeptide reads, in one-letter code: General stress protein 26 (140 aa).

The chain is General stress protein 26 (ydaG) from Bacillus subtilis (strain 168).